The primary structure comprises 157 residues: 6,7-dimethyl-8-ribityllumazine synthase 1 (157 aa).

5-amino-6-(D-ribitylamino)uracil is bound by residues Phe-22, 53 to 55 (ALE), and 82 to 84 (TVI). Position 87–88 (87–88 (ET)) interacts with (2S)-2-hydroxy-3-oxobutyl phosphate. The active-site Proton donor is His-90. Asn-115 is a binding site for 5-amino-6-(D-ribitylamino)uracil. Residue Arg-129 participates in (2S)-2-hydroxy-3-oxobutyl phosphate binding.

Belongs to the DMRL synthase family. Homopentamer.

The enzyme catalyses (2S)-2-hydroxy-3-oxobutyl phosphate + 5-amino-6-(D-ribitylamino)uracil = 6,7-dimethyl-8-(1-D-ribityl)lumazine + phosphate + 2 H2O + H(+). Its pathway is cofactor biosynthesis; riboflavin biosynthesis; riboflavin from 2-hydroxy-3-oxobutyl phosphate and 5-amino-6-(D-ribitylamino)uracil: step 1/2. Its function is as follows. Catalyzes the formation of 6,7-dimethyl-8-ribityllumazine by condensation of 5-amino-6-(D-ribitylamino)uracil with 3,4-dihydroxy-2-butanone 4-phosphate. This is the penultimate step in the biosynthesis of riboflavin. The sequence is that of 6,7-dimethyl-8-ribityllumazine synthase 1 (ribH1) from Brucella melitensis biotype 1 (strain ATCC 23456 / CCUG 17765 / NCTC 10094 / 16M).